Here is a 135-residue protein sequence, read N- to C-terminus: NADH-quinone oxidoreductase subunit K (135 aa).

3 consecutive transmembrane segments (helical) span residues 33 to 53 (VLGL…FAIG), 63 to 83 (FLFM…AFVV), and 95 to 115 (IMFI…LAIL).

Belongs to the complex I subunit 4L family. As to quaternary structure, NDH-1 is composed of 14 different subunits. Subunits NuoA, H, J, K, L, M, N constitute the membrane sector of the complex.

It localises to the cell inner membrane. It carries out the reaction a quinone + NADH + 5 H(+)(in) = a quinol + NAD(+) + 4 H(+)(out). Its function is as follows. NDH-1 shuttles electrons from NADH, via FMN and iron-sulfur (Fe-S) centers, to quinones in the respiratory chain. The immediate electron acceptor for the enzyme in this species is believed to be ubiquinone. Couples the redox reaction to proton translocation (for every two electrons transferred, four hydrogen ions are translocated across the cytoplasmic membrane), and thus conserves the redox energy in a proton gradient. The chain is NADH-quinone oxidoreductase subunit K from Psychrobacter cryohalolentis (strain ATCC BAA-1226 / DSM 17306 / VKM B-2378 / K5).